The primary structure comprises 364 residues: Lysophosphatidic acid receptor 1 (364 aa).

Residues 1–50 (MAAISTSIPVISQPQFTAMNEPQCFYNESIAFFYNRSGKHLATEWNTVSK) are Extracellular-facing. 2 disulfides stabilise this stretch: cysteine 24-cysteine 190 and cysteine 188-cysteine 195. N-linked (GlcNAc...) asparagine glycosylation is found at asparagine 27 and asparagine 35. Residue lysine 39 participates in a 1-acyl-sn-glycero-3-phosphate binding. A helical membrane pass occupies residues 51–75 (LVMGLGITVCIFIMLANLLVMVAIY). Residues 76 to 83 (VNRRFHFP) are Cytoplasmic-facing. A helical membrane pass occupies residues 84–107 (IYYLMANLAAADFFAGLAYFYLMF). At 108 to 121 (NTGPNTRRLTVSTW) the chain is on the extracellular side. Residues 122 to 144 (LLRQGLIDTSLTASVANLLAIAI) form a helical membrane-spanning segment. Position 124-129 (124-129 (RQGLID)) interacts with a 1-acyl-sn-glycero-3-phosphate. The Cytoplasmic portion of the chain corresponds to 145–163 (ERHITVFRMQLHTRMSNRR). A helical membrane pass occupies residues 164–184 (VVVVIVVIWTMAIVMGAIPSV). The Extracellular portion of the chain corresponds to 185 to 204 (GWNCICDIENCSNMAPLYSD). A helical transmembrane segment spans residues 205 to 225 (SYLVFWAIFNLVTFVVMVVLY). Tryptophan 210 is a binding site for a 1-acyl-sn-glycero-3-phosphate. Over 226 to 255 (AHIFGYVRQRTMRMSRHSSGPRRNRDTMMS) the chain is Cytoplasmic. The chain crosses the membrane as a helical span at residues 256 to 280 (LLKTVVIVLGAFIICWTPGLVLLLL). Residues 281-294 (DVCCPQCDVLAYEK) lie on the Extracellular side of the membrane. A disulfide bond links cysteine 284 and cysteine 287. A helical membrane pass occupies residues 295–315 (FFLLLAEFNSAMNPIIYSYRD). Residues 316-364 (KEMSATFRQILCCQRSENPTGPTEGSDRSASSLNHTILAGVHSNDHSVV) are Cytoplasmic-facing. Residue serine 341 is modified to Phosphoserine. Residue threonine 351 is modified to Phosphothreonine.

Belongs to the G-protein coupled receptor 1 family. Interacts with RALA and GRK2. Interacts with GNAQ and GNA13. Interacts with CD14; the interaction is enhanced by exposure to bacterial lipopolysaccharide (LPS). In terms of processing, N-glycosylated. As to expression, expressed in many adult organs, including brain, heart, colon, small intestine, placenta, prostate, ovary, pancreas, testes, spleen, skeletal muscle, and kidney. Little or no expression in liver, lung, thymus, or peripheral blood leukocytes. Detected in lung fibroblasts from bronchoalveolar fluid from patients with idiopathic pulmonary fibrosis. Detected in bone marrow-derived mesenchymal stem cells.

Its subcellular location is the cell surface. It localises to the cell membrane. The protein localises to the endosome. In terms of biological role, receptor for lysophosphatidic acid (LPA). Plays a role in the reorganization of the actin cytoskeleton, cell migration, differentiation and proliferation, and thereby contributes to the responses to tissue damage and infectious agents. Activates downstream signaling cascades via the G(i)/G(o), G(12)/G(13), and G(q) families of heteromeric G proteins. Signaling inhibits adenylyl cyclase activity and decreases cellular cAMP levels. Signaling triggers an increase of cytoplasmic Ca(2+) levels. Activates RALA; this leads to the activation of phospholipase C (PLC) and the formation of inositol 1,4,5-trisphosphate. Signaling mediates activation of down-stream MAP kinases. Contributes to the regulation of cell shape. Promotes Rho-dependent reorganization of the actin cytoskeleton in neuronal cells and neurite retraction. Promotes the activation of Rho and the formation of actin stress fibers. Promotes formation of lamellipodia at the leading edge of migrating cells via activation of RAC1. Through its function as LPA receptor, plays a role in chemotaxis and cell migration, including responses to injury and wounding. Plays a role in triggering inflammation in response to bacterial lipopolysaccharide (LPS) via its interaction with CD14. Promotes cell proliferation in response to LPA. Inhibits the intracellular ciliogenesis pathway in response to LPA and through AKT1 activation. Required for normal skeleton development. May play a role in osteoblast differentiation. Required for normal brain development. Required for normal proliferation, survival and maturation of newly formed neurons in the adult dentate gyrus. Plays a role in pain perception and in the initiation of neuropathic pain. The sequence is that of Lysophosphatidic acid receptor 1 (LPAR1) from Homo sapiens (Human).